Consider the following 88-residue polypeptide: Small ribosomal subunit protein uS15 (88 aa).

The span at 1–20 shows a compositional bias: basic and acidic residues; sequence MLATEKKQELIDQYKRHEGD. Residues 1–21 are disordered; it reads MLATEKKQELIDQYKRHEGDT.

This sequence belongs to the universal ribosomal protein uS15 family. In terms of assembly, part of the 30S ribosomal subunit. Forms a bridge to the 50S subunit in the 70S ribosome, contacting the 23S rRNA.

In terms of biological role, one of the primary rRNA binding proteins, it binds directly to 16S rRNA where it helps nucleate assembly of the platform of the 30S subunit by binding and bridging several RNA helices of the 16S rRNA. Its function is as follows. Forms an intersubunit bridge (bridge B4) with the 23S rRNA of the 50S subunit in the ribosome. The sequence is that of Small ribosomal subunit protein uS15 from Syntrophotalea carbinolica (strain DSM 2380 / NBRC 103641 / GraBd1) (Pelobacter carbinolicus).